The chain runs to 157 residues: Cyclic pyranopterin monophosphate synthase (157 aa).

Substrate contacts are provided by residues M74–H76 and M112–E113. Residue D127 is part of the active site.

The protein belongs to the MoaC family. As to quaternary structure, homohexamer; trimer of dimers.

The enzyme catalyses (8S)-3',8-cyclo-7,8-dihydroguanosine 5'-triphosphate = cyclic pyranopterin phosphate + diphosphate. Its pathway is cofactor biosynthesis; molybdopterin biosynthesis. Catalyzes the conversion of (8S)-3',8-cyclo-7,8-dihydroguanosine 5'-triphosphate to cyclic pyranopterin monophosphate (cPMP). This is Cyclic pyranopterin monophosphate synthase from Campylobacter jejuni subsp. jejuni serotype O:2 (strain ATCC 700819 / NCTC 11168).